The chain runs to 866 residues: DNA replication licensing factor MCM4 (866 aa).

3 disordered regions span residues 1–67 (MSSP…TSPA), 81–107 (SPLN…TPLR), and 124–145 (GGGS…PVSE). Polar residues-rich tracts occupy residues 47–63 (DNIS…SLPA) and 81–93 (SPLN…SMGS). Serine 55 and serine 81 each carry phosphoserine. Position 87 is a phosphothreonine (threonine 87). The MCM domain maps to 460–669 (IYDRLARAIA…FDKRLASHLV (210 aa)). Position 512-519 (512-519 (GDPGTSKS)) interacts with ATP. The Arginine finger motif lies at 644–647 (SRFD).

The protein belongs to the MCM family. As to quaternary structure, component of the Mcm2-7 complex. The complex forms a toroidal hexameric ring with the proposed subunit order Mcm2-Mcm6-Mcm4-Mcm7-Mcm3-Mcm5. Phosphorylated by the catalytic component of the Dbf4-dependent kinase (DDK) complex Cdc7.

It localises to the nucleus. It catalyses the reaction ATP + H2O = ADP + phosphate + H(+). Functionally, acts as a component of the Mcm2-7 complex (Mcm complex) which is the putative replicative helicase essential for 'once per cell cycle' DNA replication initiation and elongation in eukaryotic cells. The active ATPase sites in the Mcm2-7 ring are formed through the interaction surfaces of two neighboring subunits such that a critical structure of a conserved arginine finger motif is provided in trans relative to the ATP-binding site of the Walker A box of the adjacent subunit. The six ATPase active sites, however, are likely to contribute differentially to the complex helicase activity. Required for DNA replication and cell proliferation. Essential role in mitotic DNA replication but not in endoreplication. The protein is DNA replication licensing factor MCM4 (dpa) of Drosophila melanogaster (Fruit fly).